The chain runs to 2278 residues: Genome polyprotein (2278 aa).

The SF3 helicase domain maps to 454-609; the sequence is LESTANSIRS…EDWKKKNPGK (156 aa). Position 481-488 (481-488) interacts with ATP; the sequence is GPPGIGKT. Positions 939–958 are disordered; it reads EEAKGKTKHGRGAKHARRGG. Residues 944–956 show a composition bias toward basic residues; it reads KTKHGRGAKHARR. Tyr-966 bears the O-(5'-phospho-RNA)-tyrosine mark. Residues 1056–1204 enclose the Peptidase C24 domain; sequence APTPIVTFTS…TKLAQRVTKT (149 aa). Catalysis depends on for 3CLpro activity residues His-1086, Glu-1107, and Cys-1171. The RdRp catalytic domain maps to 1443–1568; the sequence is GVLYCLDYSK…SVCPATASIF (126 aa).

Homodimer. Homomultimer. In terms of processing, specific enzymatic cleavages in vivo yield mature proteins. Pro-Pol is first autocatalytically cleaved, then processes the whole polyprotein. Post-translationally, VPg is uridylylated by the polymerase and is covalently attached to the 5'-end of the polyadenylated genomic and subgenomic RNAs. This uridylylated form acts as a nucleotide-peptide primer for the polymerase.

The protein resides in the virion. It localises to the host cytoplasm. The catalysed reaction is a ribonucleoside 5'-triphosphate + H2O = a ribonucleoside 5'-diphosphate + phosphate + H(+). It catalyses the reaction RNA(n) + a ribonucleoside 5'-triphosphate = RNA(n+1) + diphosphate. The enzyme catalyses Endopeptidase with a preference for cleavage when the P1 position is occupied by Glu-|-Xaa and the P1' position is occupied by Gly-|-Yaa.. Together with NTPase and NS4, initiates the formation of the replication complex. Induces the proliferation of the host smooth ER membranes forming long tubular structures. These remodeled membranes probably form the viral factories that contain the replication complex. In terms of biological role, displays NTPase activity, but no helicase activity. Induces the formation of convoluted membranes derived from the host ER. These remodeled membranes probably form the viral factories that contain the replication complex. Together with NS2 and NS4, initiates the formation of the replication complex. Functionally, probable key protein responsible for the formation of membrane alterations by the virus. Induces the formation of convoluted membranes derived from the host ER. These remodeled membranes probably form the viral factories that contain the replication complex. Together with NS2 and NTPase, initiates the formation of the replication complex. Its function is as follows. Viral genome-linked protein is covalently linked to the 5'-end of the positive-strand, negative-strand genomic RNAs and subgenomic RNA. Acts as a genome-linked replication primer. May recruit ribosome to viral RNA thereby promoting viral proteins translation. Interacts with host translation initiation complex to allow the translation of viral proteins. Protease-polymerase p76 processes the polyprotein: Pro-Pol is first released by autocleavage, then all other proteins are cleaved. Cleaves host translation initiation factor eIF4G1, eIF4G2 and PABP1 thereby inducing a shutdown of host protein synthesis. This shutdown may not prevent viral mRNA from being translated since viral Vpg replaces the cap. It is also an RNA-directed RNA polymerase which replicates genomic and antigenomic viral RNA by recognizing specific signals. Also transcribes a subgenomic mRNA by initiating RNA synthesis internally on antigenomic RNA. This sgRNA codes for structural proteins. Catalyzes the covalent attachment VPg with viral RNAs. In terms of biological role, capsid protein self assembles to form an icosahedral capsid with a T=3 symmetry, about 38 nm in diameter, and consisting of 180 capsid proteins. The capsid encapsulate the genomic RNA and VP2 proteins. Attaches virion to target cells, inducing endocytosis of the viral particle. Acidification of the endosome induces conformational change of capsid protein thereby injecting virus genomic RNA into host cytoplasm. In Homo sapiens (Human), this protein is Genome polyprotein.